A 125-amino-acid chain; its full sequence is Major intrinsically disordered NOTCH2-binding receptor 1-like (125 aa).

N37 carries an N-linked (GlcNAc...) asparagine glycan. A helical membrane pass occupies residues 100-120; sequence FAFITLFVCAVVIIITVPIVV.

This sequence belongs to the MINAR family. In terms of assembly, interacts with NOTCH2. Highly expressed in the auditory hair cells.

The protein localises to the lysosome membrane. It localises to the endoplasmic reticulum membrane. In terms of biological role, binds cholesterol and may regulate the distribution and homeostasis of cholesterol in hair cells. May play a role in angiogenesis. This Danio rerio (Zebrafish) protein is Major intrinsically disordered NOTCH2-binding receptor 1-like.